Consider the following 183-residue polypeptide: Archaemetzincin (183 aa).

Position 131 (His-131) interacts with Zn(2+). Glu-132 serves as the catalytic Proton acceptor. Residues His-135, His-141, Cys-142, Cys-147, Cys-166, and Cys-169 each contribute to the Zn(2+) site.

The protein belongs to the peptidase M54 family. In terms of assembly, monomer. Requires Zn(2+) as cofactor.

Its function is as follows. Probable zinc metalloprotease whose natural substrate is unknown. This is Archaemetzincin from Saccharolobus islandicus (strain L.S.2.15 / Lassen #1) (Sulfolobus islandicus).